Reading from the N-terminus, the 144-residue chain is Large ribosomal subunit protein uL16 (144 aa).

Basic residues predominate over residues 1–19 (MLLPKRVKYRRQHRPKTTG). Positions 1-23 (MLLPKRVKYRRQHRPKTTGRSKG) are disordered.

The protein belongs to the universal ribosomal protein uL16 family. Part of the 50S ribosomal subunit.

Its function is as follows. Binds 23S rRNA and is also seen to make contacts with the A and possibly P site tRNAs. This Staphylococcus carnosus (strain TM300) protein is Large ribosomal subunit protein uL16.